The sequence spans 152 residues: Large ribosomal subunit protein uL22 (152 aa).

It belongs to the universal ribosomal protein uL22 family. In terms of assembly, part of the 50S ribosomal subunit.

In terms of biological role, this protein binds specifically to 23S rRNA. It makes multiple contacts with different domains of the 23S rRNA in the assembled 50S subunit and ribosome. Its function is as follows. The globular domain of the protein is located near the polypeptide exit tunnel on the outside of the subunit, while an extended beta-hairpin is found that lines the wall of the exit tunnel in the center of the 70S ribosome. The polypeptide is Large ribosomal subunit protein uL22 (Cenarchaeum symbiosum (strain A)).